We begin with the raw amino-acid sequence, 146 residues long: 3-hydroxyacyl-[acyl-carrier-protein] dehydratase FabZ (146 aa).

His49 is a catalytic residue.

It belongs to the thioester dehydratase family. FabZ subfamily.

It localises to the cytoplasm. It catalyses the reaction a (3R)-hydroxyacyl-[ACP] = a (2E)-enoyl-[ACP] + H2O. Involved in unsaturated fatty acids biosynthesis. Catalyzes the dehydration of short chain beta-hydroxyacyl-ACPs and long chain saturated and unsaturated beta-hydroxyacyl-ACPs. This is 3-hydroxyacyl-[acyl-carrier-protein] dehydratase FabZ from Pseudomonas fluorescens (strain ATCC BAA-477 / NRRL B-23932 / Pf-5).